The following is a 354-amino-acid chain: Annexin A13 (354 aa).

Annexin repeat units follow at residues 26 to 97, 98 to 177, 203 to 275, and 279 to 350; these read NDPN…MLLT, DTDK…ALLQ, NLVE…LTLN, and NRPK…ALIG. 17 residues coordinate Ca(2+): M39, G41, G43, T44, E46, E83, M111, G113, G115, E118, D163, D265, M292, G294, L295, G296, and E336.

It belongs to the annexin family. In terms of assembly, homodimer.

The protein localises to the tegument. The protein resides in the secreted. It is found in the extracellular exosome. It localises to the host cell. Functionally, involved in reproduction of the worm. Involved in host-parasite interaction. Delivered into the host cell by means of parasite exosomes. Binds to acidic phospholipid membranes in a calcium-dependent manner in vitro. Causes aggregation of liposomes in the presence of calcium, but not in its absence. Likely to promote membrane fusion. May provide structural integrity within the tegument. The polypeptide is Annexin A13 (Schistosoma japonicum (Blood fluke)).